Consider the following 774-residue polypeptide: C6 finger domain transcription factor nscR (774 aa).

Positions 17–43 (CELCRERKIKCDKVDPCNNCVSAGVVC) form a DNA-binding region, zn(2)-C6 fungal-type. Disordered regions lie at residues 61 to 94 (RPMSPTFVPPRAPTPVAGPVPSEKKQTDHSSGAV), 536 to 559 (LQLPQPSNGSSQPPSSPSPRPQEH), and 665 to 697 (PTFSLGSSTGTSAAPTPRSRASSTPSDTLSDLS). Over residues 67–78 (FVPPRAPTPVAG) the composition is skewed to pro residues. Residues 536 to 548 (LQLPQPSNGSSQP) are compositionally biased toward low complexity. Over residues 665-674 (PTFSLGSSTG) the composition is skewed to polar residues. Positions 675–697 (TSAAPTPRSRASSTPSDTLSDLS) are enriched in low complexity.

The protein resides in the nucleus. In terms of biological role, transcription factor that specifically regulates the neosartoricin biosynthesis gene cluster. In Aspergillus fumigatus (strain ATCC MYA-4609 / CBS 101355 / FGSC A1100 / Af293) (Neosartorya fumigata), this protein is C6 finger domain transcription factor nscR.